Here is a 166-residue protein sequence, read N- to C-terminus: Kelch repeat protein B10 (166 aa).

Kelch repeat units follow at residues 25–76 (TIFV…STFG) and 77–129 (MLYF…KLNN).

The protein belongs to the poxviruses Kelch family.

This Oryctolagus cuniculus (Rabbit) protein is Kelch repeat protein B10.